Reading from the N-terminus, the 768-residue chain is Solute carrier family 45 member 4 (768 aa).

Residues 1-32 (MKMAPQNADPESMQVQELSVPLPDPQKAGGAE) are disordered. 6 helical membrane passes run 63–83 (EFCY…IGLP), 86–106 (YYSL…PLIG), 123–143 (ILAL…GSAI), 155–175 (PIGI…ADAT), 196–216 (LNIH…LGGL), and 233–253 (VLFF…LFSI). Disordered regions lie at residues 259–284 (SPQQ…PAFP) and 379–419 (NEAK…RHAF). Phosphoserine is present on residues Ser-424 and Ser-454. Residues 460–489 (DMQKRQRQHRHRNQSGATTSSGDTESEEGE) form a disordered region. The segment covering 473 to 482 (QSGATTSSGD) has biased composition (low complexity). Position 485 is a phosphoserine (Ser-485). 6 consecutive transmembrane segments (helical) span residues 518–538 (TWFS…QVIF), 560–580 (MGCW…ALLQ), 592–612 (VIYV…AMFP), 614–634 (VYVA…ISYC), 666–686 (ILSC…GGVV), and 695–715 (IPMV…FLVI). The segment at 726–768 (EQKGLSSPLAGEGRAGGNSEKPTVLKLTRKEGLQGPVETESVV) is disordered. A Phosphoserine modification is found at Ser-732.

This sequence belongs to the glycoside-pentoside-hexuronide (GPH) cation symporter transporter (TC 2.A.2) family.

It localises to the membrane. The enzyme catalyses sucrose(out) + H(+)(out) = sucrose(in) + H(+)(in). Proton-associated sucrose transporter. May be able to transport also glucose and fructose. The sequence is that of Solute carrier family 45 member 4 from Homo sapiens (Human).